A 552-amino-acid chain; its full sequence is HTH-type transcriptional regulator SgrR (552 aa).

Positions 163–493 (ELKPDLAHHW…DDLDTDAQQW (331 aa)) are solute-binding.

Activates the small RNA gene sgrS under glucose-phosphate stress conditions as well as yfdZ. Represses its own transcription under both stress and non-stress conditions. Might act as a sensor of the intracellular accumulation of phosphoglucose by binding these molecules in its C-terminal solute-binding domain. This is HTH-type transcriptional regulator SgrR from Pectobacterium atrosepticum (strain SCRI 1043 / ATCC BAA-672) (Erwinia carotovora subsp. atroseptica).